The chain runs to 416 residues: Probable F-box protein At5g47300 (416 aa).

Residues 40 to 86 form the F-box domain; sequence TLMLSDLPGDLLEEILCRVPATSLKQLRSTCKQWNNLFNNGRFTRKH.

The sequence is that of Probable F-box protein At5g47300 from Arabidopsis thaliana (Mouse-ear cress).